Reading from the N-terminus, the 135-residue chain is Protein 4.7 (135 aa).

In Escherichia coli (Bacteriophage T7), this protein is Protein 4.7.